We begin with the raw amino-acid sequence, 75 residues long: Protease B inhibitor 1 (75 aa).

The residue at position 74 (threonine 74) is a Phosphothreonine.

This sequence belongs to the protease inhibitor I9 family. In terms of assembly, part of the heterodimeric LMA1 complex together with the thioredoxin II/TRX2. LMA1 binds to the ATPase SEC18.

Its subcellular location is the cytoplasm. The protein localises to the nucleus. Cytosolic inhibitor of vacuolar proteinase B (yscB), probably regulating protease B activity during limited proteolysis. PBI2 is a component of the LMA1 complex, which is involved in the facilitation of vesicle fusion such as homotypic vacuole and ER-derived COPII vesicle fusion with the Golgi. The sequence is that of Protease B inhibitor 1 (PBI2) from Saccharomyces cerevisiae (Baker's yeast).